We begin with the raw amino-acid sequence, 375 residues long: MRQMAPLIMLAAGGTGGHLFPAEALGVALMKRGLRVRLVTDMRALRYSGLFSRDMVDVVPSETLRGRSPVALARTALKLGTGTLMALSLMLRLKPAAVIGFGGYPTLPPLLAARMFGIPTLVHDSNAVMGRANRFLSHKVTAIATSLPGVLDRDPALAAKTTTTGTPMRPAILAAAAVPFAAPEAEGPLRLLVVGGSQGARVMADVVPGAIEKLGPALWPRLVVVQQVRDEDMARVRAVYDRLKLNFELEPFFNDLPARLAASHLVISRSGAGTVAELAAIGRPSILVPLPGALDQDQFANAGVLSQAGGAIRIAQDDFTPTRLAQEISALAADPARLVAMAAAGRGAGRLDAAERLADLVVKVAGISSKTSQLQ.

UDP-N-acetyl-alpha-D-glucosamine contacts are provided by residues 15–17 (TGG), N126, R169, S197, and Q298.

The protein belongs to the glycosyltransferase 28 family. MurG subfamily.

It is found in the cell inner membrane. The enzyme catalyses di-trans,octa-cis-undecaprenyl diphospho-N-acetyl-alpha-D-muramoyl-L-alanyl-D-glutamyl-meso-2,6-diaminopimeloyl-D-alanyl-D-alanine + UDP-N-acetyl-alpha-D-glucosamine = di-trans,octa-cis-undecaprenyl diphospho-[N-acetyl-alpha-D-glucosaminyl-(1-&gt;4)]-N-acetyl-alpha-D-muramoyl-L-alanyl-D-glutamyl-meso-2,6-diaminopimeloyl-D-alanyl-D-alanine + UDP + H(+). Its pathway is cell wall biogenesis; peptidoglycan biosynthesis. Its function is as follows. Cell wall formation. Catalyzes the transfer of a GlcNAc subunit on undecaprenyl-pyrophosphoryl-MurNAc-pentapeptide (lipid intermediate I) to form undecaprenyl-pyrophosphoryl-MurNAc-(pentapeptide)GlcNAc (lipid intermediate II). The polypeptide is UDP-N-acetylglucosamine--N-acetylmuramyl-(pentapeptide) pyrophosphoryl-undecaprenol N-acetylglucosamine transferase (Rhodopseudomonas palustris (strain BisB18)).